Reading from the N-terminus, the 66-residue chain is DNA-directed RNA polymerase subunit omega (66 aa).

The protein belongs to the RNA polymerase subunit omega family. The RNAP catalytic core consists of 2 alpha, 1 beta, 1 beta' and 1 omega subunit. When a sigma factor is associated with the core the holoenzyme is formed, which can initiate transcription.

It carries out the reaction RNA(n) + a ribonucleoside 5'-triphosphate = RNA(n+1) + diphosphate. Functionally, promotes RNA polymerase assembly. Latches the N- and C-terminal regions of the beta' subunit thereby facilitating its interaction with the beta and alpha subunits. This is DNA-directed RNA polymerase subunit omega from Bacillus licheniformis (strain ATCC 14580 / DSM 13 / JCM 2505 / CCUG 7422 / NBRC 12200 / NCIMB 9375 / NCTC 10341 / NRRL NRS-1264 / Gibson 46).